The following is a 440-amino-acid chain: MTQTQFQVVILATDKASGNSKLEPIDATIPHSLLPIANRPLISYQLEFLEKAGFETKSEPVIIVVNETSQEKIKQYVSEIYKGKIEVEFFVLKDQLATCEILYRIRDKIRLEYFMVLNANLVLEDTFIRQMADLHRKEESSLTVLLKPPTPKVEQKGKGATETSTKQDKLFTDYIALEEKSQKIVMMEPATEVEEDLNFNKSLLKYFPNVTIYTNLQDTQLYIFSRWVLDLIIEDQKEKYPLFFDIKKHLIPYLLSCQIPNIKRKRALPASAFNQNQTLSQTMSSTTSPFDQFSELNAQKNKTIKCFAHLLKKEGYCMNVNTIKNYQQINRDIAKGDLQYLPNEPKSEKNFFIDPTANVTITQVGPQCVIGTSTTLGAKCSVKFSIIGKHCKIGDGVRIENSIIMDHVIIEDRCVINSSIICNDVYIKSGSSTVGQYLTK.

This sequence belongs to the eIF-2B gamma/epsilon subunits family. In terms of assembly, component of the translation initiation factor 2B (eIF2B) complex which is a heterodecamer of two sets of five different subunits: alpha, beta, gamma, delta and epsilon. Subunits alpha, beta and delta comprise a regulatory subcomplex and subunits epsilon and gamma comprise a catalytic subcomplex. Within the complex, the hexameric regulatory complex resides at the center, with the two heterodimeric catalytic subcomplexes bound on opposite sides.

It localises to the cytoplasm. It is found in the cytosol. Acts as a component of the translation initiation factor 2B (eIF2B) complex, which catalyzes the exchange of GDP for GTP on the eukaryotic initiation factor 2 (eIF2) complex gamma subunit. Its guanine nucleotide exchange factor activity is repressed when bound to eIF2 complex phosphorylated on the alpha subunit, thereby limiting the amount of methionyl-initiator methionine tRNA available to the ribosome and consequently global translation is repressed. The protein is Translation initiation factor eIF2B subunit gamma (eif2b3) of Dictyostelium discoideum (Social amoeba).